Consider the following 270-residue polypeptide: Putative protein-disulfide oxidoreductase RT0103 (270 aa).

The N-terminal stretch at 1–17 (MKNIFIVLIFLFLSSCA) is a signal peptide. A Thioredoxin domain is found at 71–264 (SVLTQDLHEQ…ISRAVDRALE (194 aa)). Residues cysteine 117 and cysteine 120 are joined by a disulfide bond.

This sequence belongs to the thioredoxin family. DsbA subfamily.

It localises to the periplasm. Its function is as follows. May be required for disulfide bond formation in some proteins. This is Putative protein-disulfide oxidoreductase RT0103 from Rickettsia typhi (strain ATCC VR-144 / Wilmington).